A 326-amino-acid polypeptide reads, in one-letter code: Pyruvate dehydrogenase E1 component subunit beta (326 aa).

Thiamine diphosphate is bound at residue glutamate 59.

As to quaternary structure, heterodimer of an alpha and a beta chain. It depends on thiamine diphosphate as a cofactor.

The catalysed reaction is N(6)-[(R)-lipoyl]-L-lysyl-[protein] + pyruvate + H(+) = N(6)-[(R)-S(8)-acetyldihydrolipoyl]-L-lysyl-[protein] + CO2. The pyruvate dehydrogenase complex catalyzes the overall conversion of pyruvate to acetyl-CoA and CO(2). It contains multiple copies of three enzymatic components: pyruvate dehydrogenase (E1), dihydrolipoamide acetyltransferase (E2) and lipoamide dehydrogenase (E3). The sequence is that of Pyruvate dehydrogenase E1 component subunit beta (pdhB) from Rickettsia felis (strain ATCC VR-1525 / URRWXCal2) (Rickettsia azadi).